The sequence spans 45 residues: Large ribosomal subunit protein bL34 (45 aa).

This sequence belongs to the bacterial ribosomal protein bL34 family.

This chain is Large ribosomal subunit protein bL34, found in Acidothermus cellulolyticus (strain ATCC 43068 / DSM 8971 / 11B).